A 299-amino-acid chain; its full sequence is Glycine--tRNA ligase alpha subunit (299 aa).

It belongs to the class-II aminoacyl-tRNA synthetase family. Tetramer of two alpha and two beta subunits.

It localises to the cytoplasm. It carries out the reaction tRNA(Gly) + glycine + ATP = glycyl-tRNA(Gly) + AMP + diphosphate. This Pediococcus pentosaceus (strain ATCC 25745 / CCUG 21536 / LMG 10740 / 183-1w) protein is Glycine--tRNA ligase alpha subunit.